The following is a 159-amino-acid chain: SsrA-binding protein (159 aa).

It belongs to the SmpB family.

The protein resides in the cytoplasm. Its function is as follows. Required for rescue of stalled ribosomes mediated by trans-translation. Binds to transfer-messenger RNA (tmRNA), required for stable association of tmRNA with ribosomes. tmRNA and SmpB together mimic tRNA shape, replacing the anticodon stem-loop with SmpB. tmRNA is encoded by the ssrA gene; the 2 termini fold to resemble tRNA(Ala) and it encodes a 'tag peptide', a short internal open reading frame. During trans-translation Ala-aminoacylated tmRNA acts like a tRNA, entering the A-site of stalled ribosomes, displacing the stalled mRNA. The ribosome then switches to translate the ORF on the tmRNA; the nascent peptide is terminated with the 'tag peptide' encoded by the tmRNA and targeted for degradation. The ribosome is freed to recommence translation, which seems to be the essential function of trans-translation. The polypeptide is SsrA-binding protein (Coxiella burnetii (strain RSA 331 / Henzerling II)).